We begin with the raw amino-acid sequence, 324 residues long: Testisin (324 aa).

The N-terminal stretch at 1–21 (MGARGKTLVPLLVVVATAAMA) is a signal peptide. Positions 22-54 (LQSTYLQVDPEKPELQEPDLLSGPCGHRTIPSR) are excised as a propeptide. Disulfide bonds link Cys-46–Cys-167 and Cys-80–Cys-96. The region spanning 55–296 (IVGGDDAELG…HYNWIQSTMI (242 aa)) is the Peptidase S1 domain. Active-site charge relay system residues include His-95 and Asp-147. N-linked (GlcNAc...) asparagine glycosylation is found at Asn-170, Asn-177, and Asn-210. Disulfide bonds link Cys-181–Cys-254, Cys-214–Cys-233, and Cys-244–Cys-272. The Charge relay system role is filled by Ser-248. Asn-283 is a glycosylation site (N-linked (GlcNAc...) asparagine). Residue Asn-298 is the site of GPI-anchor amidated asparagine attachment. Positions 299–324 (GLLRPDPVPLLLFLTLAWASSLLRPA) are cleaved as a propeptide — removed in mature form.

The protein belongs to the peptidase S1 family. Testis.

It is found in the cell membrane. Functionally, could regulate proteolytic events associated with testicular germ cell maturation. This is Testisin (Prss21) from Mus musculus (Mouse).